The sequence spans 328 residues: Sterol-4-alpha-carboxylate 3-dehydrogenase, decarboxylating (328 aa).

The active-site Proton acceptor is the tyrosine 145. Lysine 149 is an NAD(+) binding site. A helical transmembrane segment spans residues 259 to 279; it reads LHMVLPTPIALSLVWIMALIW.

This sequence belongs to the 3-beta-HSD family. Homodimer.

Its subcellular location is the endoplasmic reticulum membrane. It is found in the lipid droplet. The catalysed reaction is a 3beta-hydroxysteroid-4alpha-carboxylate + NADP(+) = a 3-oxosteroid + CO2 + NADPH. It catalyses the reaction a 3beta-hydroxysteroid-4alpha-carboxylate + NAD(+) = a 3-oxosteroid + CO2 + NADH. It participates in steroid biosynthesis; zymosterol biosynthesis; zymosterol from lanosterol: step 4/6. Functionally, catalyzes the NAD(P)(+)-dependent oxidative decarboxylation of the C4 methyl groups of 4-alpha-carboxysterols in post-squalene cholesterol biosynthesis. In Dictyostelium discoideum (Social amoeba), this protein is Sterol-4-alpha-carboxylate 3-dehydrogenase, decarboxylating (nsdhl).